A 354-amino-acid chain; its full sequence is MRLEKGMKIKDTLKIMCPGTQLREGLENILRAKTGGLIVIGDNKEVMDTVDGGFTLNSDYSPSYVYELAKMDGAIVISEDLKKIVCANAQLIPDPSIITHETGTRHRTAHRIAKQTNNIVIAISQRRNIITVYKGDIKYVLRDSSVILARANQAIQTLEKYVSVLERVINNLNLLEFQDLTTLFDVVTAIQRTEMVMRIVEEINMYILELGNEGRLISMQLNELVKHIERDGILLIRDYCKEDFEYNEVYEQIQKLSAAELLDLDAIARLLGHTGDPLVDTLISAKGYRILGKVPRIPSTVIENLIKEFRELNSVIEADLDELDIVEGIGEARAKAIKDGLKRIREQILLNKKI.

A DAC domain is found at 6–144 (GMKIKDTLKI…GDIKYVLRDS (139 aa)). Residues Gly73, Leu91, and 104 to 108 (TRHRT) each bind ATP.

It belongs to the DisA family. Homooctamer. Requires Mg(2+) as cofactor.

It catalyses the reaction 2 ATP = 3',3'-c-di-AMP + 2 diphosphate. Functionally, participates in a DNA-damage check-point that is active prior to asymmetric division when DNA is damaged. DisA forms globular foci that rapidly scan along the chromosomes during sporulation, searching for lesions. When a lesion is present, DisA pauses at the lesion site. This triggers a cellular response that culminates in a temporary block in sporulation initiation. Its function is as follows. Also has diadenylate cyclase activity, catalyzing the condensation of 2 ATP molecules into cyclic di-AMP (c-di-AMP). c-di-AMP acts as a signaling molecule that couples DNA integrity with progression of sporulation. The rise in c-di-AMP level generated by DisA while scanning the chromosome, operates as a positive signal that advances sporulation; upon encountering a lesion, the DisA focus arrests at the damaged site and halts c-di-AMP synthesis. The protein is DNA integrity scanning protein DisA of Clostridium botulinum (strain Alaska E43 / Type E3).